The primary structure comprises 168 residues: Lipoprotein signal peptidase (168 aa).

Transmembrane regions (helical) follow at residues 8–28 (TLLV…VVLL), 70–90 (KYFL…YLFF), and 104–124 (VLLC…GHIV). Catalysis depends on residues D125 and D143. A helical transmembrane segment spans residues 134 to 154 (WAFPTFNVADVLISLGTLLLV).

The protein belongs to the peptidase A8 family.

It is found in the cell inner membrane. The catalysed reaction is Release of signal peptides from bacterial membrane prolipoproteins. Hydrolyzes -Xaa-Yaa-Zaa-|-(S,diacylglyceryl)Cys-, in which Xaa is hydrophobic (preferably Leu), and Yaa (Ala or Ser) and Zaa (Gly or Ala) have small, neutral side chains.. It functions in the pathway protein modification; lipoprotein biosynthesis (signal peptide cleavage). Functionally, this protein specifically catalyzes the removal of signal peptides from prolipoproteins. The polypeptide is Lipoprotein signal peptidase (Chlamydia pneumoniae (Chlamydophila pneumoniae)).